Reading from the N-terminus, the 462-residue chain is Hydroxymethylglutaryl-CoA synthase (462 aa).

Glu86 serves as the catalytic Proton donor/acceptor. Cys120 (acyl-thioester intermediate) is an active-site residue. The (3S)-3-hydroxy-3-methylglutaryl-CoA site is built by Cys120, Thr211, His261, Lys270, Asn338, and Ser372. The active-site Proton donor/acceptor is the His261.

It belongs to the thiolase-like superfamily. HMG-CoA synthase family.

It carries out the reaction acetoacetyl-CoA + acetyl-CoA + H2O = (3S)-3-hydroxy-3-methylglutaryl-CoA + CoA + H(+). Its pathway is siderophore biosynthesis. Its function is as follows. Hydroxymethylglutaryl-CoA synthase involved in the biosynthesis of siderophore ferrichrome A which is contributing to organismal virulence. The first step of ferrichrome A biosynthesis is performed by the HMG-CoA synthase hcs1 which catalyzes the generation of HMG-CoA and CoA using acetoacetyl-CoA and acetyl-CoA as substrates. The enoyl-CoA isomerase/hydratase fer4 then catalyzes the conversion of hcs1-produced HMG-CoA to methylglutaconyl-CoA. The acyltransferase fer5 then fuses the fer4-generated methylglutaconyl-CoA with sid1-generated hydroxyornithine to yield methylglutaconyl hydroxyornithine. Methylglutaconyl hydroxyornithine is then available for use by the NRPS fer3 to generate ferrichrome A. The protein is Hydroxymethylglutaryl-CoA synthase of Mycosarcoma maydis (Corn smut fungus).